Consider the following 85-residue polypeptide: uncharacterized protein (85 aa).

This is an uncharacterized protein from Enterobacteria phage T3 (Bacteriophage T3).